Reading from the N-terminus, the 240-residue chain is Ribonuclease HII (240 aa).

The RNase H type-2 domain occupies Gly-27–Asp-226. 3 residues coordinate a divalent metal cation: Asp-33, Glu-34, and Asp-127.

This sequence belongs to the RNase HII family. Mn(2+) is required as a cofactor. The cofactor is Mg(2+).

The protein localises to the cytoplasm. It catalyses the reaction Endonucleolytic cleavage to 5'-phosphomonoester.. Functionally, endonuclease that specifically degrades the RNA of RNA-DNA hybrids. The polypeptide is Ribonuclease HII (Parafrankia sp. (strain EAN1pec)).